A 202-amino-acid polypeptide reads, in one-letter code: Potassium-transporting ATPase KdpC subunit (202 aa).

The chain crosses the membrane as a helical span at residues 7 to 27 (PAIFVLLALTLITGLLYPLAM). The interval 66-103 (FHGRPSATSTADPNDSTKTVPAPYNAANSSGSNLGPTS) is disordered. Polar residues-rich tracts occupy residues 71 to 84 (SATS…STKT) and 91 to 101 (AANSSGSNLGP).

The protein belongs to the KdpC family. As to quaternary structure, the system is composed of three essential subunits: KdpA, KdpB and KdpC.

It is found in the cell inner membrane. Its function is as follows. Part of the high-affinity ATP-driven potassium transport (or Kdp) system, which catalyzes the hydrolysis of ATP coupled with the electrogenic transport of potassium into the cytoplasm. This subunit acts as a catalytic chaperone that increases the ATP-binding affinity of the ATP-hydrolyzing subunit KdpB by the formation of a transient KdpB/KdpC/ATP ternary complex. The polypeptide is Potassium-transporting ATPase KdpC subunit (Bradyrhizobium sp. (strain ORS 278)).